A 271-amino-acid chain; its full sequence is NADPH-dependent 7-cyano-7-deazaguanine reductase (271 aa).

A substrate-binding site is contributed by 81-83 (IES). 83 to 84 (SK) is a binding site for NADPH. Cys-177 (thioimide intermediate) is an active-site residue. Asp-184 functions as the Proton donor in the catalytic mechanism. 216–217 (HE) contacts substrate. 245 to 246 (RG) contacts NADPH.

It belongs to the GTP cyclohydrolase I family. QueF type 2 subfamily. Homodimer.

It is found in the cytoplasm. It carries out the reaction 7-aminomethyl-7-carbaguanine + 2 NADP(+) = 7-cyano-7-deazaguanine + 2 NADPH + 3 H(+). It participates in tRNA modification; tRNA-queuosine biosynthesis. In terms of biological role, catalyzes the NADPH-dependent reduction of 7-cyano-7-deazaguanine (preQ0) to 7-aminomethyl-7-deazaguanine (preQ1). The protein is NADPH-dependent 7-cyano-7-deazaguanine reductase of Xanthomonas axonopodis pv. citri (strain 306).